We begin with the raw amino-acid sequence, 150 residues long: Large ribosomal subunit protein uL15 (150 aa).

Positions 1–51 (MKLHTLRPAKGSVKTSKRIGRGTGSGRGGTSTKGHKGAKSRSGYSSKIGFE) are disordered. Residues 21 to 31 (RGTGSGRGGTS) show a composition bias toward gly residues.

The protein belongs to the universal ribosomal protein uL15 family. As to quaternary structure, part of the 50S ribosomal subunit.

Its function is as follows. Binds to the 23S rRNA. The sequence is that of Large ribosomal subunit protein uL15 from Cytophaga hutchinsonii (strain ATCC 33406 / DSM 1761 / CIP 103989 / NBRC 15051 / NCIMB 9469 / D465).